A 200-amino-acid chain; its full sequence is Ribonuclease HII (200 aa).

An RNase H type-2 domain is found at leucine 10 to phenylalanine 200. A divalent metal cation contacts are provided by aspartate 16, glutamate 17, and aspartate 108.

This sequence belongs to the RNase HII family. The cofactor is Mn(2+). It depends on Mg(2+) as a cofactor.

It localises to the cytoplasm. The catalysed reaction is Endonucleolytic cleavage to 5'-phosphomonoester.. Its function is as follows. Endonuclease that specifically degrades the RNA of RNA-DNA hybrids. The protein is Ribonuclease HII of Bacteroides thetaiotaomicron (strain ATCC 29148 / DSM 2079 / JCM 5827 / CCUG 10774 / NCTC 10582 / VPI-5482 / E50).